We begin with the raw amino-acid sequence, 306 residues long: Probable pinoresinol-lariciresinol reductase 3 (306 aa).

Residues 14–20, R39, and K46 each bind NADP(+); that span reads GATGRLG. The active-site Proton acceptor is K131. R135 is an NADP(+) binding site.

It belongs to the NmrA-type oxidoreductase family. Isoflavone reductase subfamily. As to quaternary structure, dimer.

Probable reductase that might be involved in the reduction of lariciresinol into secoisolariciresinol. In most plant species, a single enzyme is able to reduce both pinoresinol and lariciresinol efficiently while in Arabidopsis, PRR1 and PRR2 show a strict substrate selectivity for pinoresinol. This chain is Probable pinoresinol-lariciresinol reductase 3 (PLR3), found in Arabidopsis thaliana (Mouse-ear cress).